The following is a 391-amino-acid chain: MSIVRMTDLDLSGKRVLIRQDLNVPIDNGQITSEQRITASVPTIKLALEKGAAVMVTSHLGRPKEGSWTEEDSLAPVATRLAALLGVDVPLVRDWVDGVKVAPGQVVLLENCRMNVGEGKDDQTLARKYAALCDVFVMDAFGTAHRAQASTHGVIRFAPVAAGGPLLMAELDALAKALDNPAKPLLAIVAGSKVSTKLELLSNLVDKVDQLIVGGGIANTFIAAAGHHVGKSLNEPDLIPTANQIVADAKTRGAEIPLPTDVVVAKQFLPDAEASVKALDAVDADDLILDIGPQTAQRYAELIASAGTVVWNGPVGVFEFESFSHGTETLARAIASSKAFSIAGGGDTLAAVDKYDIAKDVTYISTGGGAFLEFLEGKTLPAVAALQARGQ.

Substrate contacts are provided by residues 21–23, Arg36, 59–62, Arg113, and Arg146; these read DLN and HLGR. ATP contacts are provided by residues Lys197, Glu319, and 345–348; that span reads GGDT.

Belongs to the phosphoglycerate kinase family. As to quaternary structure, monomer.

It is found in the cytoplasm. It catalyses the reaction (2R)-3-phosphoglycerate + ATP = (2R)-3-phospho-glyceroyl phosphate + ADP. It participates in carbohydrate degradation; glycolysis; pyruvate from D-glyceraldehyde 3-phosphate: step 2/5. The chain is Phosphoglycerate kinase from Xanthomonas oryzae pv. oryzae (strain PXO99A).